The chain runs to 212 residues: uncharacterized protein (212 aa).

4 helical membrane-spanning segments follow: residues 34 to 54 (IFGI…PAPG), 59 to 79 (FGVL…ELWL), 126 to 146 (ILMG…IPGT), and 171 to 191 (AGMI…YVFF).

It to R.meliloti ExoD.

It localises to the cell membrane. This is an uncharacterized protein from Synechocystis sp. (strain ATCC 27184 / PCC 6803 / Kazusa).